A 1832-amino-acid polypeptide reads, in one-letter code: MNAFQDFELGAKLYLQCLLSLSSSRSATPSYTSPVNHAGASPLNAIAHSPVNVSATHRQNFFTPIANQSQQQQQQQPVAVPLDSKWKTTPSPVLYNANNNSSNNNTSSSNNNNNSNWEVGSNSNTHVAATAAATSTVGAQPLPPQTTPVSLVMHAPPPQQQPLQQQHHHHQPPPPPPASLPAPSAPPTSGSSSSHNSVGHATSVIRISSSQQQHQQQQQHQQQAHPHVVVSGGQTFHPVIVDATQLSVPLPPTTVSFHQPNTPTSTAASVASMSQDKMLAKNGYNAPWFKLLPHMTPMSKASPAPVTPTLTTSASSYNVVMMQQQQQHQQLQQQQQLQQQQQSPPQMPLNHNNNHLIVSAPLSSPGKPLNCSMNDAKVAAAAAAAAVANQRQKQQQEEPDDQLDDDVFETTTPGISANSKKQTAAMRLPTHNSNIRKLEECHDDGAAGAPATSAAKRRSQSLSALQQQQQQQQQAGAAGTAAGQPANKKIRRPMNAFMIFSKKHRKMVHKKHPNQDNRTVSKILGEWWYALKPEQKAQYHELASSVKDAHFKLHPEWKWCSKDRRKSSTSTATPGGKASGAAGTGDAKQRLVSVDGSDSLEHDMCPSTPGGSGSCGGQGISSDLQGDIIPLTIDNYNSTCDEAPTTISMKGNGNGKLMKNELPSDEDEQMLVVEEEQQQQTVKKIDLHCRERVNDSDMDDTPFDYRKQQPEANQRSAEEHSTSGANGQAINAPPLSGGEREITLKPKAIKAHPVLESNMLPYTQMSIYTQYTSPKNPIGVTPFQPTGGAFKSMPISPKGSGGKPEDAGSLQAHIKQEDIKQEPPSPYKLNNGSGSASGGGVVSAPPPNSGSVGAIFNFNVPTATALSQKQFHYPMHHPHRSPTDLRDEEADREEITQGTKSGESSEKDKPALDDQERDEVEEEDEDEEDDDEDDEDDEQFMQELASVNASAGFDDLVPYAMPKVVITPTPTPPPVATIVTPIKRKQFTIVRSLTPLQPSNSPHQQLKHLHQRRGETPPTVITRVPTPTINHFTIIRTQQHPHTHPHNTPPPLFFKQKVQGSPVIATVTTSTLSSSSSNPANNEAPNKFSNFPTQHQPTTTTTISCNTNNNATPIIRKLLTLQEGAELGGSHKGTGRAAILYDALVLDTLHGQDEEEEEDEGNAEKQENPKVAGKEQVTTSQPATMLLITDVNAYNQQHVAGNAATPVSGAATLRPVSFISINACNKITLPANARILTAATATSTAAGAAVTSQAGATLTVMTKASAATNHSSSNASDITITAASAAPVPTSGSSIVMINSTTNPSTSSNSTSCSAAAHQACVPSSPAGMGLGHAANIATPPASAPAQIMGGGPASQKMFFAMTHPYTLLQRSHQPGTPSLEHLQLDAFAPGGYTLRNHNGLSSLPPPVSAQPTMLLHGYPPSHGVEPPARSPSYKSMPSTPKSATYLMSAPPERGMDGGMSGCASAAASGGDESDIDADGQQFILAPTPAQLGRAPLQRRKNLSQSKSESNVSFGANLGASNGQHISRKLHSPTMMESSSPIIGHVNSSNLSSALPTPTSSTTTPNSDEQLPLTPTTSSSNSNLNQQQPKSPMKGAPGSTAAALKKKNDEMNNSVLKQVDFEKKYKALPQFQPEDCQSPSAIAVPSSPRVYGTNYRKKNTAPPPVQKLMCEDDSIDEPASAPPTTTQRFFGPDFNNELKELESSDQTGRSPRTPKTPLQSARSDASEKGHRKVLETRRSLVLQLFAEHGNFPTAQATMAFQSKHSDVFPRKQDLQLKIREVRQKLLGQASCTPHSAGPNTPSDSNSSSTTLSASSTSLNMQTTSAADVFQYY.

Residues Ser-41 and Ser-49 each carry the phosphoserine modification. Disordered stretches follow at residues 66–121 (ANQS…EVGS), 135–227 (STVG…AHPH), 323–353 (QQQQ…NHNN), 389–427 (NQRQ…AAMR), 444–493 (DGAA…IRRP), 563–619 (DRRK…GGQG), 690–739 (RERV…SGGE), 784–845 (QPTG…VSAP), 874–938 (PMHH…EDDE), 1069–1105 (TSTL…TISC), 1151–1178 (GQDE…EQVT), 1457–1602 (DGGM…STAA), 1632–1668 (QPED…VQKL), 1701–1733 (LESS…HRKV), and 1789–1817 (ASCT…SSTS). Over residues 96-121 (NANNNSSNNNTSSSNNNNNSNWEVGS) the composition is skewed to low complexity. Positions 172–186 (PPPPPPASLPAPSAP) are enriched in pro residues. Low complexity-rich tracts occupy residues 187–203 (PTSG…HATS), 211–223 (QQQH…HQQQ), and 323–342 (QQQQ…QQQQ). Residues 397-408 (EEPDDQLDDDVF) are compositionally biased toward acidic residues. The span at 409-422 (ETTTPGISANSKKQ) shows a compositional bias: polar residues. The span at 446 to 484 (AAGAPATSAAKRRSQSLSALQQQQQQQQQAGAAGTAAGQ) shows a compositional bias: low complexity. A DNA-binding region (HMG box) is located at residues 490-558 (IRRPMNAFMI…AHFKLHPEWK (69 aa)). Gly residues predominate over residues 610–619 (GGSGSCGGQG). An interaction with gro region spans residues 834 to 1832 (GSASGGGVVS…TSAADVFQYY (999 aa)). Positions 903–914 (ESSEKDKPALDD) are enriched in basic and acidic residues. The span at 915-938 (QERDEVEEEDEDEEDDDEDDEDDE) shows a compositional bias: acidic residues. A compositionally biased stretch (polar residues) spans 1078–1091 (NPANNEAPNKFSNF). The segment covering 1092–1105 (PTQHQPTTTTTISC) has biased composition (low complexity). Residues 1462–1471 (GCASAAASGG) show a composition bias toward low complexity. The segment covering 1503–1525 (LSQSKSESNVSFGANLGASNGQH) has biased composition (polar residues). Residues 1547–1589 (NSSNLSSALPTPTSSTTTPNSDEQLPLTPTTSSSNSNLNQQQP) are compositionally biased toward low complexity. Thr-1716 carries the post-translational modification Phosphothreonine. The span at 1724-1733 (DASEKGHRKV) shows a compositional bias: basic and acidic residues. Residues 1789-1799 (ASCTPHSAGPN) are compositionally biased toward polar residues. Positions 1800 to 1817 (TPSDSNSSSTTLSASSTS) are enriched in low complexity.

In terms of assembly, interacts with gro. Expressed in the central region of embryos. Also expressed in ovarian follicle cells, the wing imaginal disks and the wing pouch.

It is found in the nucleus. Its function is as follows. Transcriptional repressor required for the specification of numerous cell types during embryonic development. Required for terminal patterning of early embryos. May associate with gro to repress tll and hkb, restricting their expression to embryonic terminal poles where they initiate correct development of head and tail structures. Required for dorsoventral patterning of oocytes and early embryos. Cooperates with dl to repress zen and other dorsal specific genes within the embryo and promotes expression of the ventralizing factor pip in ovarian follicle cells. Required during wing development for the specification of intervein areas, where it mediates localized repression of vein specific genes such as aos, dpp and vvl. The chain is Putative transcription factor capicua (cic) from Drosophila melanogaster (Fruit fly).